The chain runs to 655 residues: A-type voltage-gated potassium channel KCND3 (655 aa).

The Cytoplasmic portion of the chain corresponds to 1-182; it reads MAAGVAAWLP…FENPHTSTLA (182 aa). The interaction with KCNIP1 and KCNIP2 stretch occupies residues 6 to 21; that stretch reads AAWLPFARAAAIGWMP. Residues 70-78 are interaction with KCNIP1; it reads EKEFFFNED. Histidine 104, cysteine 110, cysteine 131, and cysteine 132 together coordinate Zn(2+). Residue serine 153 is modified to Phosphoserine. Residues 183–204 traverse the membrane as a helical segment; the sequence is LVFYYVTGFFIAVSVITNVVET. The Extracellular portion of the chain corresponds to 205-223; that stretch reads VPCGTVPGSKELPCGERYS. A helical membrane pass occupies residues 224-246; the sequence is VAFFCLDTACVMIFTVEYLLRLF. At 247–253 the chain is on the cytoplasmic side; it reads AAPSRYR. The chain crosses the membrane as a helical span at residues 254–277; the sequence is FIRSVMSIIDVVAIMPYYIGLVMT. The Extracellular segment spans residues 278-283; the sequence is NNEDVS. Residues 284 to 306 form a helical; Voltage-sensor membrane-spanning segment; that stretch reads GAFVTLRVFRVFRIFKFSRHSQG. Topologically, residues 307–318 are cytoplasmic; it reads LRILGYTLKSCA. Residues 319–343 traverse the membrane as a helical segment; the sequence is SELGFLLFSLTMAIIIFATVMFYAE. Residues 344–352 lie on the Extracellular side of the membrane; sequence KGSSASKFT. The segment at residues 353-366 is an intramembrane region (helical); sequence SIPASFWYTIVTMT. Residues threonine 367, leucine 368, glycine 369, and tyrosine 370 each coordinate K(+). A Selectivity filter motif is present at residues 367-372; sequence TLGYGD. The stretch at 367–374 is an intramembrane region; that stretch reads TLGYGDMV. The helical transmembrane segment at 378–400 threads the bilayer; sequence IAGKIFGSICSLSGVLVIALPVP. At 401–655 the chain is on the cytoplasmic side; sequence VIVSNFSRIY…ASNVVKVSVL (255 aa). The residue at position 459 (threonine 459) is a Phosphothreonine. An interaction with KCNIP1 and KCNIP2 region spans residues 470 to 487; it reads SLIESQHHHLLHCLEKTT. The segment at 472-487 is mediates dendritic targeting; the sequence is IESQHHHLLHCLEKTT. The residue at position 569 (serine 569) is a Phosphoserine; by CaMK2D. At serine 585 the chain carries Phosphoserine. Residues 618-644 form a disordered region; that stretch reads PAPPALTPEGETRPPPASPGPNTNIPS.

It belongs to the potassium channel family. D (Shal) (TC 1.A.1.2) subfamily. Kv4.3/KCND3 sub-subfamily. Homotetramer. Heterotetramer with KCND2. Associates with the regulatory subunits KCNIP3 and KCNIP4. Interacts with KCNE1, KCNE2, SCN1B and KCNAB1 and DLG1. Component of heteromultimeric potassium channels. Identified in potassium channel complexes containing KCND1, KCND2, KCND3, KCNIP1, KCNIP2, KCNIP3, KCNIP4, DPP6 and DPP10. Interacts with KCNIP1; each KCNIP1 monomer interacts with two adjacent KCND3 subunits, through both the N-terminal inactivation ball of a KCND3 subunit and a C-terminal helix from the adjacent KCND3 subunit, clamping them together; this interaction stabilizes the tetrameric form and modulates the channel gating kinetics namely channel activation and inactivation kinetics and rate of recovery from inactivation. Interacts with DPP6; this interaction modulates the channel gating kinetics namely channel activation and inactivation kinetics and rate of recovery from inactivation. Interacts with KCNIP2; each KCNIP2 monomer interacts with two adjacent KCND3 subunits, through both the N-terminal inactivation ball of a KCND3 subunit and a C-terminal helix from the adjacent KCND3 subunit, clamping them together; this interaction modulates the channel gating kinetics. Regulated through phosphorylation at Ser-569 by CaMK2D. As to expression, detected in carotid body chemoreceptor cells and in frontal cortex.

It is found in the cell membrane. It localises to the sarcolemma. The protein resides in the cell projection. The protein localises to the dendrite. It carries out the reaction K(+)(in) = K(+)(out). Pore-forming (alpha) subunit of voltage-gated A-type potassium channels that mediates transmembrane potassium transport in excitable membranes, in brain and heart. In cardiomyocytes, may generate the transient outward potassium current I(To). In neurons, may conduct the transient subthreshold somatodendritic A-type potassium current (ISA). Kinetics properties are characterized by fast activation at subthreshold membrane potentials, rapid inactivation, and quick recovery from inactivation. Channel properties are modulated by interactions with regulatory subunits. Interaction with the regulatory subunits KCNIP1 or KCNIP2 modulates the channel gating kinetics namely channel activation and inactivation kinetics and rate of recovery from inactivation. Likewise, interaction with DPP6 modulates the channel gating kinetics namely channel activation and inactivation kinetics. In Oryctolagus cuniculus (Rabbit), this protein is A-type voltage-gated potassium channel KCND3.